The following is a 40-amino-acid chain: Photosystem II reaction center protein J (40 aa).

The chain crosses the membrane as a helical span at residues isoleucine 8 to phenylalanine 28.

Belongs to the PsbJ family. In terms of assembly, PSII is composed of 1 copy each of membrane proteins PsbA, PsbB, PsbC, PsbD, PsbE, PsbF, PsbH, PsbI, PsbJ, PsbK, PsbL, PsbM, PsbT, PsbX, PsbY, PsbZ, Psb30/Ycf12, peripheral proteins PsbO, CyanoQ (PsbQ), PsbU, PsbV and a large number of cofactors. It forms dimeric complexes.

It is found in the cellular thylakoid membrane. One of the components of the core complex of photosystem II (PSII). PSII is a light-driven water:plastoquinone oxidoreductase that uses light energy to abstract electrons from H(2)O, generating O(2) and a proton gradient subsequently used for ATP formation. It consists of a core antenna complex that captures photons, and an electron transfer chain that converts photonic excitation into a charge separation. This Nostoc sp. (strain PCC 7120 / SAG 25.82 / UTEX 2576) protein is Photosystem II reaction center protein J.